Reading from the N-terminus, the 151-residue chain is Ribosome maturation factor RimP (151 aa).

The protein belongs to the RimP family.

Its subcellular location is the cytoplasm. Its function is as follows. Required for maturation of 30S ribosomal subunits. The sequence is that of Ribosome maturation factor RimP from Aliivibrio salmonicida (strain LFI1238) (Vibrio salmonicida (strain LFI1238)).